The primary structure comprises 411 residues: MQYLISSLIFLIPSLGMLAGLSAAATVTIFLLISFLRGINRHCERLQGVWQSSNNVIPWLDHGIQKIQKDWIPLQAHGITMLFTAWCFISCLFAIHLINSLATFTQVFILLFLGFAVSNSAPFQNRLQLKKALIFGILTAILLFFIEYSSNGFLTRIFKTSFALYMLDRGCALLSITAWVAIIILLSNGKKRHTLMLYILVLYLLSISDSLASFLGFGIGGVIFILTRFMKPIFFKLIAISLITGSLLFPVIAKQIEPQDLSEKYLATQPSAAHRLFIWHFVANKIIEKPILGYGLASSKYIKAGDSEMIDYNGEKWHPLPLHPHNNILQITLELGIIGLILFLCLVYKYLKQISNLENKNFKAISYACFINYYIIGMISYNIWQIWWISSGIWVLVLMKLLVKPDIVIDN.

10 helical membrane-spanning segments follow: residues L15–F35, G78–I98, L101–A121, L133–F153, M166–L186, I207–T227, I233–A253, I328–Y348, N361–Y381, and I383–V403.

It belongs to the O-antigen ligase family.

The protein resides in the membrane. This Rickettsia conorii (strain ATCC VR-613 / Malish 7) protein is Putative polysaccharide ligase RC0486.